The primary structure comprises 321 residues: Protein-L-isoaspartate O-methyltransferase (321 aa).

Residues 21–31 are compositionally biased toward basic and acidic residues; sequence KPAERQREKRI. A disordered region spans residues 21–65; sequence KPAERQREKRISSGVNAVSLPTPARTASAERASSTPAPGPGPQRV. Over residues 41–56 the composition is skewed to low complexity; sequence PTPARTASAERASSTP. Ser-153 is an active-site residue.

This sequence belongs to the methyltransferase superfamily. L-isoaspartyl/D-aspartyl protein methyltransferase family.

Its subcellular location is the cytoplasm. It catalyses the reaction [protein]-L-isoaspartate + S-adenosyl-L-methionine = [protein]-L-isoaspartate alpha-methyl ester + S-adenosyl-L-homocysteine. In terms of biological role, catalyzes the methyl esterification of L-isoaspartyl residues in peptides and proteins that result from spontaneous decomposition of normal L-aspartyl and L-asparaginyl residues. It plays a role in the repair and/or degradation of damaged proteins. The polypeptide is Protein-L-isoaspartate O-methyltransferase (Ralstonia nicotianae (strain ATCC BAA-1114 / GMI1000) (Ralstonia solanacearum)).